The chain runs to 118 residues: Small ribosomal subunit protein uS13 (118 aa).

The segment at 94–118 is disordered; the sequence is SLPLRGQRTKTNARTRKGPRKPIRK.

The protein belongs to the universal ribosomal protein uS13 family. Part of the 30S ribosomal subunit. Forms a loose heterodimer with protein S19. Forms two bridges to the 50S subunit in the 70S ribosome.

Located at the top of the head of the 30S subunit, it contacts several helices of the 16S rRNA. In the 70S ribosome it contacts the 23S rRNA (bridge B1a) and protein L5 of the 50S subunit (bridge B1b), connecting the 2 subunits; these bridges are implicated in subunit movement. Contacts the tRNAs in the A and P-sites. The sequence is that of Small ribosomal subunit protein uS13 from Shewanella violacea (strain JCM 10179 / CIP 106290 / LMG 19151 / DSS12).